A 272-amino-acid chain; its full sequence is Orotidine 5'-phosphate decarboxylase (272 aa).

Lysine 95 serves as the catalytic Proton donor.

The protein belongs to the OMP decarboxylase family. Type 2 subfamily.

The enzyme catalyses orotidine 5'-phosphate + H(+) = UMP + CO2. It participates in pyrimidine metabolism; UMP biosynthesis via de novo pathway; UMP from orotate: step 2/2. This chain is Orotidine 5'-phosphate decarboxylase, found in Cupriavidus necator (strain ATCC 17699 / DSM 428 / KCTC 22496 / NCIMB 10442 / H16 / Stanier 337) (Ralstonia eutropha).